Here is a 342-residue protein sequence, read N- to C-terminus: HTH-type transcriptional regulator GbpR (342 aa).

The 58-residue stretch at 16-73 (LKLRHLQLFVALDEHRNLHRAAASLTMSQPAASKLLGDLEESLGVTLFERHGRGVEPN) folds into the HTH lysR-type domain. Positions 33 to 52 (LHRAAASLTMSQPAASKLLG) form a DNA-binding region, H-T-H motif.

The protein belongs to the LysR transcriptional regulatory family.

Its function is as follows. Does not seem to be required for sbpA expression. The protein is HTH-type transcriptional regulator GbpR (gbpR) of Azospirillum brasilense.